We begin with the raw amino-acid sequence, 1129 residues long: Phytochrome A (1129 aa).

Residues 217–399 (SMERLCDTMV…VFAIHVSKEL (183 aa)) enclose the GAF domain. A phytochromobilin-binding site is contributed by cysteine 322. 2 PAS domains span residues 622–692 (VTSE…LQGK) and 755–826 (DYKA…VNLG). In terms of domain architecture, Histidine kinase spans 906–1123 (YLRRQAKNPL…TFIITVELAA (218 aa)).

The protein belongs to the phytochrome family. As to quaternary structure, homodimer. Post-translationally, contains one covalently linked phytochromobilin chromophore.

In terms of biological role, regulatory photoreceptor which exists in two forms that are reversibly interconvertible by light: the Pr form that absorbs maximally in the red region of the spectrum and the Pfr form that absorbs maximally in the far-red region. Photoconversion of Pr to Pfr induces an array of morphogenic responses, whereas reconversion of Pfr to Pr cancels the induction of those responses. Pfr controls the expression of a number of nuclear genes including those encoding the small subunit of ribulose-bisphosphate carboxylase, chlorophyll A/B binding protein, protochlorophyllide reductase, rRNA, etc. It also controls the expression of its own gene(s) in a negative feedback fashion. The chain is Phytochrome A (PHYA) from Petroselinum crispum (Parsley).